The sequence spans 130 residues: Secreted RxLR effector protein 68 (130 aa).

Positions 1–29 are cleaved as a signal peptide; the sequence is MRCVCASIRRTRIIEFLMFFALSSSTASC. N-linked (GlcNAc...) asparagine glycosylation is present at Asn36. A RxLR motif is present at residues 45–48; it reads RWLR.

It belongs to the RxLR effector family.

Its subcellular location is the secreted. The protein localises to the host cytoplasm. It localises to the host nucleus. Effector that acts as a broad suppressor of cell death to interrupt plant immunity. Inhibits cell death induced by cell death-inducing proteins, including the PAMP elicitor INF1 from P.infestans. The protein is Secreted RxLR effector protein 68 of Plasmopara viticola (Downy mildew of grapevine).